We begin with the raw amino-acid sequence, 746 residues long: Chitin biosynthesis protein CHS6 (746 aa).

Residues 1–25 (MNLFWPSETKKQNEIPGGDYTPGNS) are disordered. The segment at 734–746 (LAWIADLDHTVQP) is CHS5-binding.

Belongs to the CHAPS family. In terms of assembly, component of the CHS5/6 complex composed of the 4 CHAPS proteins BCH1, BCH2, BUD7, and CHS6 as well as at least CHS5 and GTP-bound ARF1. The complex interacts with the cargo protein CHS3.

The protein resides in the golgi apparatus. It is found in the trans-Golgi network membrane. Functionally, member of the CHS5-ARF1P-binding proteins (CHAPS) which mediates export of specific cargo proteins, including chitin synthase CHS3. The polypeptide is Chitin biosynthesis protein CHS6 (CHS6) (Saccharomyces cerevisiae (strain ATCC 204508 / S288c) (Baker's yeast)).